Reading from the N-terminus, the 301-residue chain is tRNA-cytidine(32) 2-sulfurtransferase (301 aa).

Positions 47-52 (SGGKDS) match the PP-loop motif motif. Residues cysteine 122, cysteine 125, and cysteine 213 each coordinate [4Fe-4S] cluster.

This sequence belongs to the TtcA family. As to quaternary structure, homodimer. Mg(2+) is required as a cofactor. The cofactor is [4Fe-4S] cluster.

Its subcellular location is the cytoplasm. The catalysed reaction is cytidine(32) in tRNA + S-sulfanyl-L-cysteinyl-[cysteine desulfurase] + AH2 + ATP = 2-thiocytidine(32) in tRNA + L-cysteinyl-[cysteine desulfurase] + A + AMP + diphosphate + H(+). Its pathway is tRNA modification. Its function is as follows. Catalyzes the ATP-dependent 2-thiolation of cytidine in position 32 of tRNA, to form 2-thiocytidine (s(2)C32). The sulfur atoms are provided by the cysteine/cysteine desulfurase (IscS) system. This chain is tRNA-cytidine(32) 2-sulfurtransferase, found in Photobacterium profundum (strain SS9).